A 561-amino-acid chain; its full sequence is Lanosterol 14-alpha demethylase (561 aa).

A heme-binding site is contributed by C501.

Belongs to the cytochrome P450 family. Heme serves as cofactor.

Its subcellular location is the membrane. It catalyses the reaction a 14alpha-methyl steroid + 3 reduced [NADPH--hemoprotein reductase] + 3 O2 = a Delta(14) steroid + formate + 3 oxidized [NADPH--hemoprotein reductase] + 4 H2O + 4 H(+). The catalysed reaction is a 14alpha-methyl steroid + reduced [NADPH--hemoprotein reductase] + O2 = a 14alpha-hydroxymethyl steroid + oxidized [NADPH--hemoprotein reductase] + H2O + H(+). It carries out the reaction a 14alpha-hydroxymethyl steroid + reduced [NADPH--hemoprotein reductase] + O2 = a 14alpha-formyl steroid + oxidized [NADPH--hemoprotein reductase] + 2 H2O + H(+). The enzyme catalyses a 14alpha-formyl steroid + reduced [NADPH--hemoprotein reductase] + O2 = a Delta(14) steroid + formate + oxidized [NADPH--hemoprotein reductase] + H2O + 2 H(+). It catalyses the reaction lanosterol + 3 reduced [NADPH--hemoprotein reductase] + 3 O2 = 4,4-dimethyl-5alpha-cholesta-8,14,24-trien-3beta-ol + formate + 3 oxidized [NADPH--hemoprotein reductase] + 4 H2O + 4 H(+). The catalysed reaction is lanosterol + reduced [NADPH--hemoprotein reductase] + O2 = 32-hydroxylanosterol + oxidized [NADPH--hemoprotein reductase] + H2O + H(+). It carries out the reaction 32-hydroxylanosterol + reduced [NADPH--hemoprotein reductase] + O2 = 32-oxolanosterol + oxidized [NADPH--hemoprotein reductase] + 2 H2O + H(+). The enzyme catalyses 32-oxolanosterol + reduced [NADPH--hemoprotein reductase] + O2 = 4,4-dimethyl-5alpha-cholesta-8,14,24-trien-3beta-ol + formate + oxidized [NADPH--hemoprotein reductase] + H2O + 2 H(+). It catalyses the reaction eburicol + 3 reduced [NADPH--hemoprotein reductase] + 3 O2 = 14-demethyleburicol + formate + 3 oxidized [NADPH--hemoprotein reductase] + 4 H2O + 4 H(+). The catalysed reaction is eburicol + reduced [NADPH--hemoprotein reductase] + O2 = 32-hydroxyeburicol + oxidized [NADPH--hemoprotein reductase] + H2O + H(+). It carries out the reaction 32-hydroxyeburicol + reduced [NADPH--hemoprotein reductase] + O2 = 32-oxoeburicol + oxidized [NADPH--hemoprotein reductase] + 2 H2O + H(+). The enzyme catalyses 32-oxoeburicol + reduced [NADPH--hemoprotein reductase] + O2 = 14-demethyleburicol + formate + oxidized [NADPH--hemoprotein reductase] + H2O + 2 H(+). It participates in steroid biosynthesis; zymosterol biosynthesis; zymosterol from lanosterol: step 1/6. Sterol 14alpha-demethylase that plays a critical role in the third module of ergosterol biosynthesis pathway, being ergosterol the major sterol component in fungal membranes that participates in a variety of functions. The third module or late pathway involves the ergosterol synthesis itself through consecutive reactions that mainly occur in the endoplasmic reticulum (ER) membrane. In filamentous fungi, during the initial step of this module, lanosterol (lanosta-8,24-dien-3beta-ol) can be metabolized to eburicol. Sterol 14alpha-demethylase catalyzes the three-step oxidative removal of the 14alpha-methyl group (C-32) of both these sterols in the form of formate, and converts eburicol and lanosterol to 14-demethyleburicol (4,4,24-trimethylergosta-8,14,24(28)-trienol) and 4,4-dimethyl-5alpha-cholesta-8,14,24-trien-3beta-ol, respectively, which are further metabolized by other enzymes in the pathway to ergosterol. Can also use substrates not intrinsic to fungi, such as 24,25-dihydrolanosterol (DHL), producing 4,4-dimethyl-8,14-cholestadien-3-beta-ol, but at lower rates than the endogenous substrates. The protein is Lanosterol 14-alpha demethylase (ERG11) of Mycosarcoma maydis (Corn smut fungus).